Reading from the N-terminus, the 517-residue chain is ATP synthase subunit alpha (517 aa).

Gly-174–Thr-181 contacts ATP.

The protein belongs to the ATPase alpha/beta chains family. As to quaternary structure, F-type ATPases have 2 components, CF(1) - the catalytic core - and CF(0) - the membrane proton channel. CF(1) has five subunits: alpha(3), beta(3), gamma(1), delta(1), epsilon(1). CF(0) has three main subunits: a(1), b(2) and c(9-12). The alpha and beta chains form an alternating ring which encloses part of the gamma chain. CF(1) is attached to CF(0) by a central stalk formed by the gamma and epsilon chains, while a peripheral stalk is formed by the delta and b chains.

Its subcellular location is the cell inner membrane. It catalyses the reaction ATP + H2O + 4 H(+)(in) = ADP + phosphate + 5 H(+)(out). Its function is as follows. Produces ATP from ADP in the presence of a proton gradient across the membrane. The alpha chain is a regulatory subunit. The chain is ATP synthase subunit alpha from Polaromonas sp. (strain JS666 / ATCC BAA-500).